The sequence spans 87 residues: MKTKLNELLEFPTPFTYKVMGLAKPELVDLVVEVVQRHAPGDYTPQVKPSSKGNYHSVSITINATHIEQVETLYEELGDIDIVRMVL.

Belongs to the UPF0250 family.

In Cronobacter sakazakii (strain ATCC BAA-894) (Enterobacter sakazakii), this protein is UPF0250 protein ESA_02696.